Reading from the N-terminus, the 546-residue chain is (+)-epi-alpha-bisabolol synthase (546 aa).

Aspartate 297, aspartate 301, aspartate 441, threonine 445, and glutamate 449 together coordinate Mg(2+). The DDXXD motif motif lies at 297 to 301 (DDIYD).

The protein belongs to the terpene synthase family. The cofactor is Mg(2+).

The enzyme catalyses (2E,6E)-farnesyl diphosphate + H2O = (+)-epi-alpha-bisabolol + diphosphate. The protein operates within secondary metabolite biosynthesis; terpenoid biosynthesis. Functionally, sesquiterpene synthase involved in the biosynthesis of (+)-epi-alpha-bisabolol, a precursor of the natural sweetner hernandulcin. This Phyla dulcis (Aztec sweet herb) protein is (+)-epi-alpha-bisabolol synthase.